Here is a 168-residue protein sequence, read N- to C-terminus: 2-C-methyl-D-erythritol 2,4-cyclodiphosphate synthase (168 aa).

Residues Asp-13 and His-15 each coordinate a divalent metal cation. Residues Asp-13–His-15 and His-39–Ser-40 contribute to the 4-CDP-2-C-methyl-D-erythritol 2-phosphate site. Position 47 (His-47) interacts with a divalent metal cation. 4-CDP-2-C-methyl-D-erythritol 2-phosphate-binding positions include Asp-61–Gly-63, Phe-66–Asp-70, Phe-144, and Lys-147.

The protein belongs to the IspF family. In terms of assembly, homotrimer. A divalent metal cation is required as a cofactor.

The catalysed reaction is 4-CDP-2-C-methyl-D-erythritol 2-phosphate = 2-C-methyl-D-erythritol 2,4-cyclic diphosphate + CMP. Its pathway is isoprenoid biosynthesis; isopentenyl diphosphate biosynthesis via DXP pathway; isopentenyl diphosphate from 1-deoxy-D-xylulose 5-phosphate: step 4/6. Its function is as follows. Involved in the biosynthesis of isopentenyl diphosphate (IPP) and dimethylallyl diphosphate (DMAPP), two major building blocks of isoprenoid compounds. Catalyzes the conversion of 4-diphosphocytidyl-2-C-methyl-D-erythritol 2-phosphate (CDP-ME2P) to 2-C-methyl-D-erythritol 2,4-cyclodiphosphate (ME-CPP) with a corresponding release of cytidine 5-monophosphate (CMP). The chain is 2-C-methyl-D-erythritol 2,4-cyclodiphosphate synthase from Cupriavidus metallidurans (strain ATCC 43123 / DSM 2839 / NBRC 102507 / CH34) (Ralstonia metallidurans).